A 708-amino-acid polypeptide reads, in one-letter code: Probable inactive lysine-specific demethylase JMJ19 (708 aa).

Positions 35–59 are disordered; it reads VPRDKESPRSVSRQEQTTGFGTDDK. Positions 43-54 are enriched in polar residues; sequence RSVSRQEQTTGF. Residues 108 to 149 form the JmjN domain; sequence APVFNPTEEEFRDTLSYISSLRDRAEPYGICCVVPPPSWKPP. The region spanning 293 to 454 is the JmjC domain; sequence SSGWNLNSTA…HGDIAVQVNQ (162 aa). Zn(2+) contacts are provided by Cys-544, Cys-547, Cys-558, Cys-560, Cys-567, His-570, Cys-575, and Cys-577. The RING-type; degenerate zinc-finger motif lies at 544-581; the sequence is CCVCLGDLYLSAVNCSCSANRYSCLNHMRKLCACPCDR. Residues 646–653 carry the Nuclear localization signal motif; sequence TRKDVAAG. A compositionally biased stretch (basic and acidic residues) spans 678 to 694; the sequence is AKETLESCSKKSNRPCD. The disordered stretch occupies residues 678–708; it reads AKETLESCSKKSNRPCDNDSSEANAPKKQKQ.

The protein belongs to the JARID1 histone demethylase family. Expressed in inflorescences, roots, siliques, leaves and stems.

The protein localises to the nucleus. This Arabidopsis thaliana (Mouse-ear cress) protein is Probable inactive lysine-specific demethylase JMJ19.